The sequence spans 499 residues: Lysine--tRNA ligase (499 aa).

Glutamate 408 and glutamate 415 together coordinate Mg(2+).

The protein belongs to the class-II aminoacyl-tRNA synthetase family. As to quaternary structure, homodimer. The cofactor is Mg(2+).

The protein resides in the cytoplasm. The enzyme catalyses tRNA(Lys) + L-lysine + ATP = L-lysyl-tRNA(Lys) + AMP + diphosphate. This is Lysine--tRNA ligase from Thermoanaerobacter pseudethanolicus (strain ATCC 33223 / 39E) (Clostridium thermohydrosulfuricum).